The following is a 391-amino-acid chain: 3-ketoacyl-CoA thiolase (391 aa).

Cys-95 functions as the Acyl-thioester intermediate in the catalytic mechanism. Catalysis depends on proton acceptor residues His-347 and Cys-377.

Belongs to the thiolase-like superfamily. Thiolase family. As to quaternary structure, heterotetramer of two alpha chains (FadB) and two beta chains (FadA).

It is found in the cytoplasm. It catalyses the reaction an acyl-CoA + acetyl-CoA = a 3-oxoacyl-CoA + CoA. It functions in the pathway lipid metabolism; fatty acid beta-oxidation. Functionally, catalyzes the final step of fatty acid oxidation in which acetyl-CoA is released and the CoA ester of a fatty acid two carbons shorter is formed. This chain is 3-ketoacyl-CoA thiolase, found in Pseudomonas aeruginosa (strain UCBPP-PA14).